A 267-amino-acid chain; its full sequence is Putative glycosyltransferase 63 (267 aa).

This sequence belongs to the glycosyltransferase group 1 family. Glycosyltransferase 4 subfamily.

This is Putative glycosyltransferase 63 (SIFV0063) from Sulfolobus islandicus filamentous virus (isolate Iceland/Hveragerdi) (SIFV).